The chain runs to 255 residues: MKGLRSAFSFFTIIPIKSELDEHLIAYVPLVALFDAALAASLYVAIYGISKLLASFISVSAIYIVNGLNHVDAVADAGDAMMIRNRSRIREVFEDHDVGAGGVFTLIFVYLLALISLSSMDLYIGIFSIILAEFLSKSMMMITLHRSRPLFQGIGSLFIDLYRKHDSLYTVEFVVIPIVLALLSRASIMISVALAFLIFIIVKMAVIRRFGGINGDLAGFIGELGRSIFLMISLIMAQSSVLSTYDILSKIMSSL.

A run of 6 helical transmembrane segments spans residues Leu-24–Val-44, Ala-45–Val-65, Val-98–Ser-118, Leu-122–Ile-142, Lys-164–Ser-184, and Ser-187–Ile-207.

This sequence belongs to the CobS family. It depends on Mg(2+) as a cofactor.

The protein localises to the cell membrane. It catalyses the reaction alpha-ribazole + adenosylcob(III)inamide-GDP = adenosylcob(III)alamin + GMP + H(+). It carries out the reaction alpha-ribazole 5'-phosphate + adenosylcob(III)inamide-GDP = adenosylcob(III)alamin 5'-phosphate + GMP + H(+). Its pathway is cofactor biosynthesis; adenosylcobalamin biosynthesis; adenosylcobalamin from cob(II)yrinate a,c-diamide: step 7/7. Functionally, joins adenosylcobinamide-GDP and alpha-ribazole to generate adenosylcobalamin (Ado-cobalamin). Also synthesizes adenosylcobalamin 5'-phosphate from adenosylcobinamide-GDP and alpha-ribazole 5'-phosphate. The polypeptide is Adenosylcobinamide-GDP ribazoletransferase (Thermoplasma acidophilum (strain ATCC 25905 / DSM 1728 / JCM 9062 / NBRC 15155 / AMRC-C165)).